We begin with the raw amino-acid sequence, 164 residues long: Disulfide bond formation protein B (164 aa).

Residues 1–9 lie on the Cytoplasmic side of the membrane; sequence MTLPSARTC. The helical transmembrane segment at 10 to 26 threads the bilayer; the sequence is FLLGFLFCAALLAAALY. The Periplasmic segment spans residues 27–44; sequence FQFSGGLEPCPLCISQRI. An intrachain disulfide couples Cys36 to Cys39. The helical transmembrane segment at 45–61 threads the bilayer; it reads MVLAVALVFLAAAIHHP. The Cytoplasmic portion of the chain corresponds to 62–68; the sequence is ASLGIRA. The chain crosses the membrane as a helical span at residues 69-85; it reads YALLGTAVALGGASISG. The Periplasmic portion of the chain corresponds to 86–142; sequence RHVWLLHLPPEEVPECGPGLSYMFRNFPLGDTLKAMLSGTGDCAKVDWTFLGLSMPA. A disulfide bond links Cys101 and Cys128. The chain crosses the membrane as a helical span at residues 143 to 161; the sequence is WVLICFLGLGAFSLLQWWN. The Cytoplasmic portion of the chain corresponds to 162–164; it reads AER.

The protein belongs to the DsbB family.

Its subcellular location is the cell inner membrane. Functionally, required for disulfide bond formation in some periplasmic proteins. Acts by oxidizing the DsbA protein. The sequence is that of Disulfide bond formation protein B from Methylococcus capsulatus (strain ATCC 33009 / NCIMB 11132 / Bath).